Reading from the N-terminus, the 212-residue chain is Deoxyribose-phosphate aldolase (212 aa).

The active-site Proton donor/acceptor is Asp-89. The active-site Schiff-base intermediate with acetaldehyde is Lys-151. The Proton donor/acceptor role is filled by Lys-180.

The protein belongs to the DeoC/FbaB aldolase family. DeoC type 1 subfamily.

It localises to the cytoplasm. The catalysed reaction is 2-deoxy-D-ribose 5-phosphate = D-glyceraldehyde 3-phosphate + acetaldehyde. It participates in carbohydrate degradation; 2-deoxy-D-ribose 1-phosphate degradation; D-glyceraldehyde 3-phosphate and acetaldehyde from 2-deoxy-alpha-D-ribose 1-phosphate: step 2/2. In terms of biological role, catalyzes a reversible aldol reaction between acetaldehyde and D-glyceraldehyde 3-phosphate to generate 2-deoxy-D-ribose 5-phosphate. This chain is Deoxyribose-phosphate aldolase, found in Clostridium botulinum (strain Okra / Type B1).